We begin with the raw amino-acid sequence, 344 residues long: Zinc transporter 9 (344 aa).

The helical transmembrane segment at 1-21 threads the bilayer; sequence MASILISGAAGVSIPLVGTLL. At 22–30 the chain is on the cytoplasmic side; that stretch reads PLNGGLMRG. Residues 31-51 form a helical membrane-spanning segment; sequence AKAFAAGVILATGFVHMLSGG. Residues 52–72 are Extracellular-facing; it reads SKALSDPCLPEFPWKMFPFPE. A helical membrane pass occupies residues 73 to 93; it reads FFAMVAALLTLLADFMITGYY. Residues 94–188 are Cytoplasmic-facing; the sequence is ERKQEKMMNQ…DVGLDSGVRH (95 aa). A helical membrane pass occupies residues 189-209; that stretch reads VVVSQILEMGIVSHSIIIGIS. Residues 210-221 are Extracellular-facing; that stretch reads LGVSHSPCTIRP. A helical transmembrane segment spans residues 222-242; the sequence is LLLALSFHQFFEGFALGGCVA. Over 243-251 the chain is Cytoplasmic; it reads EARLTPRGS. Residues 252-272 traverse the membrane as a helical segment; it reads AMMAFFFAITTPIGVAVGTAI. The Extracellular segment spans residues 273–291; the sequence is ASSYNSYSVAALVAEGVLD. Residues 292–312 form a helical membrane-spanning segment; sequence SLSAGILVYMALVDLIAADFL. The Cytoplasmic segment spans residues 313 to 323; it reads SKKMSVDFRVQ. A helical membrane pass occupies residues 324–344; it reads VVSYCFLFLGAGMMSALAIWA.

Belongs to the ZIP transporter (TC 2.A.5) family.

Its subcellular location is the cell membrane. Functionally, zinc transporter involved in zinc uptake in roots. Targeted by BZIP19 transcription factor in response to zinc-deficient conditions. This Arabidopsis thaliana (Mouse-ear cress) protein is Zinc transporter 9 (ZIP9).